The following is a 285-amino-acid chain: Energy-coupling factor transporter ATP-binding protein EcfA2 (285 aa).

The ABC transporter domain maps to 3-245 (IKFKKVDYIY…RKWLKKHNLS (243 aa)). Position 40–47 (40–47 (GHTGSGKS)) interacts with ATP.

Belongs to the ABC transporter superfamily. Energy-coupling factor EcfA family. As to quaternary structure, forms a stable energy-coupling factor (ECF) transporter complex composed of 2 membrane-embedded substrate-binding proteins (S component), 2 ATP-binding proteins (A component) and 2 transmembrane proteins (T component).

It is found in the cell membrane. Functionally, ATP-binding (A) component of a common energy-coupling factor (ECF) ABC-transporter complex. Unlike classic ABC transporters this ECF transporter provides the energy necessary to transport a number of different substrates. The protein is Energy-coupling factor transporter ATP-binding protein EcfA2 of Lactobacillus acidophilus (strain ATCC 700396 / NCK56 / N2 / NCFM).